We begin with the raw amino-acid sequence, 298 residues long: Homoserine kinase (298 aa).

83–93 (PISRGLGSSSS) contributes to the ATP binding site.

It belongs to the GHMP kinase family. Homoserine kinase subfamily.

The protein localises to the cytoplasm. The enzyme catalyses L-homoserine + ATP = O-phospho-L-homoserine + ADP + H(+). It participates in amino-acid biosynthesis; L-threonine biosynthesis; L-threonine from L-aspartate: step 4/5. Catalyzes the ATP-dependent phosphorylation of L-homoserine to L-homoserine phosphate. The protein is Homoserine kinase of Clostridium botulinum (strain Alaska E43 / Type E3).